Consider the following 605-residue polypeptide: Phosphoenolpyruvate carboxykinase (ATP) (605 aa).

Over residues 27–48 (SGPSSSFINNNNSNNNNNKSSN) the composition is skewed to low complexity. Positions 27–67 (SGPSSSFINNNNSNNNNNKSSNMFNHDHVNKTNLHPGGVKP) are disordered. 307–314 (GLSGTGKT) contacts ATP.

The protein belongs to the phosphoenolpyruvate carboxykinase (ATP) family.

It catalyses the reaction oxaloacetate + ATP = phosphoenolpyruvate + ADP + CO2. It functions in the pathway carbohydrate biosynthesis; gluconeogenesis. This Neurospora crassa (strain ATCC 24698 / 74-OR23-1A / CBS 708.71 / DSM 1257 / FGSC 987) protein is Phosphoenolpyruvate carboxykinase (ATP) (acu-6).